We begin with the raw amino-acid sequence, 257 residues long: Phosphonates import ATP-binding protein PhnC (257 aa).

The ABC transporter domain occupies 2–246 (IEFRNVSKVY…KFAEIYGDVA (245 aa)). 35–42 (GLSGAGKS) lines the ATP pocket.

This sequence belongs to the ABC transporter superfamily. Phosphonates importer (TC 3.A.1.9.1) family. The complex is composed of two ATP-binding proteins (PhnC), two transmembrane proteins (PhnE) and a solute-binding protein (PhnD).

The protein resides in the cell membrane. The enzyme catalyses phosphonate(out) + ATP + H2O = phosphonate(in) + ADP + phosphate + H(+). Part of the ABC transporter complex PhnCDE involved in phosphonates import. Responsible for energy coupling to the transport system. The chain is Phosphonates import ATP-binding protein PhnC from Bacillus cereus (strain ATCC 14579 / DSM 31 / CCUG 7414 / JCM 2152 / NBRC 15305 / NCIMB 9373 / NCTC 2599 / NRRL B-3711).